The following is a 396-amino-acid chain: Na(+)/H(+) antiporter NhaA 1 (396 aa).

12 consecutive transmembrane segments (helical) span residues Leu9–Ile29, Leu59–Leu79, Val95–Phe115, Gly125–Gly145, Leu154–Phe174, Ser177–Leu197, Ile200–Leu220, Gly223–Thr243, Val260–Gly280, Leu281–Gly301, Gly332–Phe352, and Ile373–Ala393.

Belongs to the NhaA Na(+)/H(+) (TC 2.A.33) antiporter family.

The protein resides in the cell inner membrane. The enzyme catalyses Na(+)(in) + 2 H(+)(out) = Na(+)(out) + 2 H(+)(in). Functionally, na(+)/H(+) antiporter that extrudes sodium in exchange for external protons. The polypeptide is Na(+)/H(+) antiporter NhaA 1 (Magnetococcus marinus (strain ATCC BAA-1437 / JCM 17883 / MC-1)).